The sequence spans 219 residues: Leukocyte surface antigen CD53 (219 aa).

Topologically, residues 1–11 (MGMSSLKLLKF) are cytoplasmic. The helical transmembrane segment at 12 to 32 (VLFFFNLIFWFCGCCILGLGI) threads the bilayer. Over 33-54 (YLLIHSKFGVLFHNLPSLTLGN) the chain is Extracellular. A helical transmembrane segment spans residues 55–69 (VLVIVGSVIMVVAFL). Over 70-80 (GCMGSIKENKC) the chain is Cytoplasmic. Residues 81–106 (LLMSFFVLLLIILLAEVTLAILLFVY) form a helical membrane-spanning segment. Over 107–181 (EQKLKEYVAE…IQAKQWFHSN (75 aa)) the chain is Extracellular. N-linked (GlcNAc...) asparagine glycans are attached at residues Asn-129 and Asn-148. The chain crosses the membrane as a helical span at residues 182 to 206 (FLYIGITTICVCVIQVLGMSFALTL). At 207–219 (NCQIDKTSQVLGL) the chain is on the cytoplasmic side.

It belongs to the tetraspanin (TM4SF) family. Interacts with SCIMP. Interacts with CD45/PTPRC. Interacts with IL7R. Interacts with RBL2 and PPP2CA.

It is found in the cell membrane. Its subcellular location is the cell junction. The protein resides in the membrane. The protein localises to the synapse. Functionally, structural component of specialized membrane microdomains known as tetraspanin-enriched microdomains (TERMs), which act as platforms for receptor clustering and signaling. Participates thereby in diverse biological functions such as cell signal transduction, adhesion, migration and protein trafficking. Plays a role in the activation of monocytes and B-cells. Acts as an essential regulator of B-cell development by promoting interleukin-7 receptor/IL7R signaling. Also promotes, in B-cells, the BCR signaling by recruiting PKC to the plasma membrane in order to phosphorylate its substrates. Plays an essential role in B- and T-cells homing to lymph nodes by stabilizing L-selectin/SELL cell surface expression. Also mediates metabolic and inflammatory functions in hepatocytes and adipose tissue by promoting TNF-alpha and LPS signaling independent of the immune compartment. This Bos taurus (Bovine) protein is Leukocyte surface antigen CD53 (CD53).